Reading from the N-terminus, the 246-residue chain is mRNA-decapping protein g5R (246 aa).

A Nudix hydrolase domain is found at 91 to 239 (KYQKFKKNWL…IIGPAFNFIK (149 aa)). The Nudix box motif lies at 128-149 (GKPKENESDLACAIREFEEETG). Glutamate 134 contributes to the Mg(2+) binding site. Glutamate 143 serves as the catalytic Nucleophile. 2 residues coordinate Mg(2+): glutamate 147 and glutamate 169.

Belongs to the Nudix hydrolase family. DIPP subfamily. As to quaternary structure, interacts with host RPL23A. Mg(2+) serves as cofactor. Mn(2+) is required as a cofactor.

Its subcellular location is the host rough endoplasmic reticulum. It catalyses the reaction diphospho-myo-inositol polyphosphate + H2O = myo-inositol polyphosphate + phosphate.. Its function is as follows. Decapping enzyme required for the removal of the 5'-end m7GpppN cap tethered to viral and host mRNAs to allow their decay in cells. May therefore accelerate viral and cellular mRNA turnover to eliminate competing host mRNAs and allow stage-specific synthesis of viral proteins. Acceleration of the turnover of cellular transcripts may even promote the shutoff of host protein synthesis. In addition to the mRNA cap, g5R also efficiently hydrolyzes diphosphoinositol polyphosphates. Down-regulation of the level of PP-InsP5 (diphosphoinositol pentakisphosphate) may play a role in viral manipulation of the cellular secretory pathway, a step necessary for the formation of virions. Binds viral and cellular poly(A) mRNAs, thereby decreasing both types of mRNAs. In African swine fever virus (isolate Pig/Kenya/KEN-50/1950) (ASFV), this protein is mRNA-decapping protein g5R.